The following is a 313-amino-acid chain: GMP synthase [glutamine-hydrolyzing] subunit B (313 aa).

The GMPS ATP-PPase domain occupies 6–190 (KVWEKFIEEK…LGLPEKIYNR (185 aa)). 33–39 (SGGVDSS) provides a ligand contact to ATP.

Heterodimer composed of a glutamine amidotransferase subunit (A) and a GMP-binding subunit (B).

The enzyme catalyses XMP + L-glutamine + ATP + H2O = GMP + L-glutamate + AMP + diphosphate + 2 H(+). Its pathway is purine metabolism; GMP biosynthesis; GMP from XMP (L-Gln route): step 1/1. Functionally, catalyzes the synthesis of GMP from XMP. This Pyrococcus furiosus (strain ATCC 43587 / DSM 3638 / JCM 8422 / Vc1) protein is GMP synthase [glutamine-hydrolyzing] subunit B (guaAB).